A 96-amino-acid polypeptide reads, in one-letter code: Pollen allergen Dac g 3 (96 aa).

The 81-residue stretch at 14–94 (KKLVLDIKYT…AFKIGTTYTP (81 aa)) folds into the Expansin-like CBD domain.

The protein belongs to the expansin family. Expansin B subfamily.

The protein resides in the secreted. The polypeptide is Pollen allergen Dac g 3 (Dactylis glomerata (Orchard grass)).